The sequence spans 1249 residues: Calmodulin-regulated spectrin-associated protein 3 (1249 aa).

Disordered stretches follow at residues 183–205 (KTEQ…APAQ), 328–385 (PDGH…SMSH), 430–457 (VSSD…GDLP), 473–609 (LLPD…RLEE), 632–696 (LGKS…HEGL), 714–1029 (QRDM…SALA), and 1061–1111 (NNLG…TGPR). The residue at position 184 (threonine 184) is a Phosphothreonine. Low complexity predominate over residues 189–205 (AQRASPAAPADGAAPAQ). Serine 193 is modified (phosphoserine). In terms of domain architecture, Calponin-homology (CH) spans 203 to 312 (PAQPSIRYRK…LVVMLAELFM (110 aa)). Serine 334, serine 341, serine 347, serine 351, serine 368, serine 373, and serine 382 each carry phosphoserine. Over residues 341–352 (SPPQNNSGSSSP) the composition is skewed to low complexity. A compositionally biased stretch (polar residues) spans 364–383 (GGPQSPLRGSTGSLKSSPSM). Over residues 437–454 (PPRPAPARTPTQPPPEPG) the composition is skewed to pro residues. A phosphoserine mark is found at serine 547, serine 554, and serine 560. Over residues 568–579 (AERKKQLVKAEA) the composition is skewed to basic and acidic residues. Positions 594–604 (EALSSEMSELS) are enriched in low complexity. Positions 594 to 628 (EALSSEMSELSARLEEKRRAIEAQKRRIEAIFAKH) form a coiled coil. The segment covering 647–657 (GEAEAEAEEAD) has biased composition (acidic residues). Phosphoserine is present on serine 685. Positions 696–729 (LGEYNRAVSKLSAALSSLQRDMQRLTDQQQRLLA) form a coiled coil. The span at 731–741 (PEAPGSAPPPA) shows a compositional bias: pro residues. The span at 754–779 (AASPSPARRVPATRRSPGPGPSQSPR) shows a compositional bias: low complexity. Serine 769 carries the post-translational modification Phosphoserine. Position 799 is a phosphothreonine (threonine 799). Serine 814 is modified (phosphoserine). A compositionally biased stretch (polar residues) spans 814-825 (SPSQVPVQTRSS). The span at 889–940 (YKDEDKPEDEMAQKRASLLERQQRRAEEARRRKQWQEVEKEQRREEAARLAQ) shows a compositional bias: basic and acidic residues. Residues 896–935 (EDEMAQKRASLLERQQRRAEEARRRKQWQEVEKEQRREEA) adopt a coiled-coil conformation. Positions 950–964 (VSAVPMATPAPAARA) are enriched in low complexity. A compositionally biased stretch (basic and acidic residues) spans 970-998 (VGPRKGDFTRQEYERRAQLKLMDDLDKVL). Phosphoserine is present on serine 1074. In terms of domain architecture, CKK spans 1109–1243 (GPRLYKEPSA…QGKKPTTPKK (135 aa)).

This sequence belongs to the CAMSAP1 family. Interacts with PLEKHA7. Interacts with CAMSAP2. Interacts with KATNA1 and KATNB1; leading to regulate the length of CAMSAP3-decorated microtubule stretches. Interacts with AKAP9; regulating Golgi assembly in epithelial cells. Interacts with MACF1. Interacts with AKNA.

It localises to the cytoplasm. The protein localises to the cytoskeleton. It is found in the cell junction. The protein resides in the adherens junction. Its subcellular location is the cilium axoneme. It localises to the cilium basal body. Functionally, key microtubule-organizing protein that specifically binds the minus-end of non-centrosomal microtubules and regulates their dynamics and organization. Specifically recognizes growing microtubule minus-ends and autonomously decorates and stabilizes microtubule lattice formed by microtubule minus-end polymerization. Acts on free microtubule minus-ends that are not capped by microtubule-nucleating proteins or other factors and protects microtubule minus-ends from depolymerization. In addition, it also reduces the velocity of microtubule polymerization. Required for the biogenesis and the maintenance of zonula adherens by anchoring the minus-end of microtubules to zonula adherens and by recruiting the kinesin KIFC3 to those junctional sites. Required for orienting the apical-to-basal polarity of microtubules in epithelial cells: acts by tethering non-centrosomal microtubules to the apical cortex, leading to their longitudinal orientation. Plays a key role in early embryos, which lack centrosomes: accumulates at the microtubule bridges that connect pairs of cells and enables the formation of a non-centrosomal microtubule-organizing center that directs intracellular transport in the early embryo. Couples non-centrosomal microtubules with actin: interaction with MACF1 at the minus ends of non-centrosomal microtubules, tethers the microtubules to actin filaments, regulating focal adhesion size and cell migration. Plays a key role in the generation of non-centrosomal microtubules by accumulating in the pericentrosomal region and cooperating with KATNA1 to release non-centrosomal microtubules from the centrosome. Through the microtubule cytoskeleton, also regulates the organization of cellular organelles including the Golgi and the early endosomes. Through interaction with AKAP9, involved in translocation of Golgi vesicles in epithelial cells, where microtubules are mainly non-centrosomal. Plays an important role in motile cilia function by facilitatating proper orientation of basal bodies and formation of central microtubule pairs in motile cilia. This chain is Calmodulin-regulated spectrin-associated protein 3, found in Homo sapiens (Human).